We begin with the raw amino-acid sequence, 1338 residues long: Phosphoribosylformylglycinamidine synthase (1338 aa).

Phosphoserine is present on S215. ATP contacts are provided by residues 322-333 (GATTGTGGRIRD) and 402-404 (AGF). S569 carries the phosphoserine modification. Phosphothreonine occurs at positions 619 and 623. A706 contributes to the ATP binding site. Residues D707, E746, N750, and D909 each contribute to the Mg(2+) site. S911 serves as a coordination point for ATP. The Glutamine amidotransferase type-1 domain maps to 1064–1302 (RVAILREEGS…AVMPHPERAV (239 aa)). Residue C1158 is the Nucleophile of the active site. Catalysis depends on residues H1297 and E1299.

It in the N-terminal section; belongs to the FGAMS family.

It localises to the cytoplasm. The catalysed reaction is N(2)-formyl-N(1)-(5-phospho-beta-D-ribosyl)glycinamide + L-glutamine + ATP + H2O = 2-formamido-N(1)-(5-O-phospho-beta-D-ribosyl)acetamidine + L-glutamate + ADP + phosphate + H(+). It participates in purine metabolism; IMP biosynthesis via de novo pathway; 5-amino-1-(5-phospho-D-ribosyl)imidazole from N(2)-formyl-N(1)-(5-phospho-D-ribosyl)glycinamide: step 1/2. In terms of biological role, phosphoribosylformylglycinamidine synthase involved in the purines biosynthetic pathway. Catalyzes the ATP-dependent conversion of formylglycinamide ribonucleotide (FGAR) and glutamine to yield formylglycinamidine ribonucleotide (FGAM) and glutamate. This is Phosphoribosylformylglycinamidine synthase (PFAS) from Homo sapiens (Human).